Here is a 193-residue protein sequence, read N- to C-terminus: Interferon type A1/A2 (193 aa).

The first 31 residues, 1-31 (MAVPASPQHPRGYGILLLTLLLKALATTASA), serve as a signal peptide directing secretion. Intrachain disulfides connect Cys32–Cys129, Cys61–Cys155, and Cys68–Cys168. N-linked (GlcNAc...) asparagine glycosylation is found at Asn65, Asn71, Asn108, and Asn186.

This sequence belongs to the alpha/beta interferon family.

It localises to the secreted. Functionally, has antiviral activities. This Gallus gallus (Chicken) protein is Interferon type A1/A2 (IFNA1).